We begin with the raw amino-acid sequence, 24 residues long: Brevinin-1 (24 aa).

Cys18 and Cys24 are oxidised to a cystine.

The protein belongs to the frog skin active peptide (FSAP) family. Brevinin subfamily. In terms of tissue distribution, expressed by the skin glands.

Its subcellular location is the secreted. In terms of biological role, shows antibacterial activity against representative Gram-negative and Gram-positive bacterial species, and a very high hemolytic activity. This chain is Brevinin-1, found in Pelophylax porosus brevipodus (Nagoya Daruma pond frog).